A 2726-amino-acid polypeptide reads, in one-letter code: Filamin-C (2726 aa).

Residues 1 to 260 are actin-binding; the sequence is MMNNSNYSDA…VMTYLSQFPK (260 aa). A Phosphoserine modification is found at S5. Calponin-homology (CH) domains lie at 37–143 and 160–263; these read KIQQ…LHYS and QTPK…KAKL. 15 Filamin repeats span residues 271–369, 371–469, 470–566, 567–659, 663–759, 760–862, 863–961, 962–1057, 1058–1150, 1151–1245, 1246–1345, 1346–1438, 1439–1534, 1535–1631, and 1636–1735; these read SKQL…EVNV, MALG…PVHV, AEAC…EVQV, SPEA…IAHI, PPDC…RVNV, GEGS…HIKV, DPSH…VVNV, APPL…AVEG, VLPP…KATI, QPVF…RVHV, QPAV…RVGV, TEGC…RVPV, KDVV…KIKV, LPSH…RIHA, and DASK…HVLA. R1003 is subject to Omega-N-methylarginine. Phosphoserine is present on residues S1162 and S1339. The hinge 1 stretch occupies residues 1736 to 1759; sequence CDPLPHVEEPAEMLQMRQPYAPLR. Filamin repeat units follow at residues 1760-1855, 1856-1947, 1948-2034, and 2037-2129; these read PGTC…QFYV, DAIN…TAKI, TGDD…KILV, and SEIG…TVKV. S2043 bears the Phosphoserine mark. Residues 2163 to 2244 are intradomain insert; mediate targeting to Z lines; the sequence is GNWFQMVSAQ…FGSITRQQEG (82 aa). A compositionally biased stretch (basic and acidic residues) spans 2193 to 2210; that stretch reads EISKTRGGETKREVRVEE. The interval 2193–2214 is disordered; that stretch reads EISKTRGGETKREVRVEESTQV. A Filamin 20; mediates interaction with XIRP1 repeat occupies 2212-2307; the sequence is TQVGGDPFPA…VPGSPFQFTV (96 aa). Residues S2234 and S2237 each carry the phosphoserine modification. T2239 carries the post-translational modification Phosphothreonine. Residues 2241 to 2260 show a composition bias toward polar residues; sequence QQEGEASSQDMTAQVTSPSG. The disordered stretch occupies residues 2241–2261; the sequence is QQEGEASSQDMTAQVTSPSGK. Filamin repeat units lie at residues 2310–2402, 2404–2497, and 2501–2593; these read LGEG…VVPV, SLSD…KIRV, and SQAG…KAKV. The interaction with INPPL1 stretch occupies residues 2404-2725; it reads SLSDDARRLT…VPGSPFKVNV (322 aa). Phosphoserine occurs at positions 2587, 2618, 2621, 2633, 2715, and 2719. Residues 2594–2630 form a hinge 2 region; the sequence is TGPRLSGGHSLHETSTVLVETVTKSSSSRGASYSSIP. A self-association site, tail region spans residues 2594 to 2726; that stretch reads TGPRLSGGHS…PGSPFKVNVP (133 aa). The Filamin 24 repeat unit spans residues 2631 to 2725; sequence KFSSDASKVV…VPGSPFKVNV (95 aa).

The protein belongs to the filamin family. In terms of assembly, homodimer; the filamin repeat 24 and the second hinge domain are important for dimer formation. Interacts with FLNB, INPPL1, ITGB1A, KCND2, MYOT, MYOZ1 and MYOZ3. Interacts with sarcoglycans SGCD and SGCG. Interacts (via filament repeats 17-18, 20-21 and 24) with USP25 (isoform USP25m only). Interacts with FBLIM1. Interacts with XIRP1; this interaction is mediated by filamin 20 repeat. Interacts with KY. Interacts with IGFN1. Interacts with MICALL2. Interacts with ANK3. Interacts with MICALL2. Interacts with ANK3. Interacts with SYNPO2. Ubiquitinated by FBXL22, leading to proteasomal degradation.

Its subcellular location is the cytoplasm. The protein resides in the membrane. It is found in the cytoskeleton. The protein localises to the myofibril. It localises to the sarcomere. Its subcellular location is the z line. Its function is as follows. Muscle-specific filamin, which plays a central role in sarcomere assembly and organization. Critical for normal myogenesis, it probably functions as a large actin-cross-linking protein with structural functions at the Z lines in muscle cells. May be involved in reorganizing the actin cytoskeleton in response to signaling events. In Mus musculus (Mouse), this protein is Filamin-C (Flnc).